A 353-amino-acid chain; its full sequence is A-kinase anchor protein 7 isoforms delta and gamma (353 aa).

Basic and acidic residues-rich tracts occupy residues 1–22 and 66–76; these read MERPAAGEIDANKCDHLSRGEE and RSKENRGDRND. Disordered regions lie at residues 1 to 33 and 47 to 85; these read MERPAAGEIDANKCDHLSRGEEGTGDLETSPVG and DDCGLPDVPQGNVPQGNPKRSKENRGDRNDHVKKRKKAK. Residues Thr134 and 224–226 contribute to the AMP site; that span reads HLT. Residues Thr134 and 224–226 contribute to the CMP site; that span reads HLT. Positions 299-353 are PKA-RII-alpha subunit binding domain; that stretch reads AELVRLSKRLVENAVLKAVQQYLEETQNKKQPGEGNSVKAEEGDRNGDGSDNNRK. The interval 300 to 324 is RI-alpha-binding; that stretch reads ELVRLSKRLVENAVLKAVQQYLEET. The interval 301–314 is RII-binding; the sequence is LVRLSKRLVENAVL. The segment at 321 to 353 is disordered; the sequence is LEETQNKKQPGEGNSVKAEEGDRNGDGSDNNRK. A compositionally biased stretch (basic and acidic residues) spans 337–353; the sequence is KAEEGDRNGDGSDNNRK.

In terms of assembly, binds cAMP-dependent protein kinase (PKA). Interacts with PRKCA; only the cytoplasmic form is capable of interacting with PRKCA. As to expression, expressed highly in the heart, and moderately in brain, lung, liver, kidney and testis. Hardly detectable in spleen and skeletal muscle. In kidney, isoform Delta is expressed in the principal cells of the IMCD.

It localises to the nucleus. The protein resides in the cytoplasm. Its subcellular location is the cell membrane. Its function is as follows. Probably targets cAMP-dependent protein kinase (PKA) to the cellular membrane or cytoskeletal structures. The membrane-associated form reduces epithelial sodium channel (ENaC) activity, whereas the free cytoplasmic form may negatively regulate ENaC channel feedback inhibition by intracellular sodium. Isoform Delta may be involved in shuttling aquaporin-2 (AQP2) to the plasma membrane. This Rattus norvegicus (Rat) protein is A-kinase anchor protein 7 isoforms delta and gamma.